Consider the following 215-residue polypeptide: Probable transaldolase (215 aa).

Lysine 83 functions as the Schiff-base intermediate with substrate in the catalytic mechanism.

This sequence belongs to the transaldolase family. Type 3B subfamily.

It is found in the cytoplasm. The enzyme catalyses D-sedoheptulose 7-phosphate + D-glyceraldehyde 3-phosphate = D-erythrose 4-phosphate + beta-D-fructose 6-phosphate. The protein operates within carbohydrate degradation; pentose phosphate pathway; D-glyceraldehyde 3-phosphate and beta-D-fructose 6-phosphate from D-ribose 5-phosphate and D-xylulose 5-phosphate (non-oxidative stage): step 2/3. Functionally, transaldolase is important for the balance of metabolites in the pentose-phosphate pathway. The chain is Probable transaldolase from Methanococcus maripaludis (strain C7 / ATCC BAA-1331).